Reading from the N-terminus, the 455-residue chain is MGSRDFISSLPDEVLGKKILSLLPTKLVVSTSVLSKRWRNLFHFVDSFDLEDSTPIRNADSFSDFMKDTVALLSNCPIKRLTLNSHYEKSSVNRWIRSALKRGCLELNLQSQYDHYLDIGIFFRNNTLVKLTLSSYRTFLRGNVPPEGRVFFPALKTLSLGAVVAKPALYNWLISGCPVLEELFILDVGSGDDQPTWTRSVVSASIKRLTIVFHFPHNTYPYEDDVEIKTPNLEFLDYSALRSDGSDVDYLDSLAEARLDLRLWELTNTFDFGEVTNLVSAIRNVKTLHLSSSSLEAFYYRCYTMPVFDKLIHLSIESDKENGWQALPRLLLKSPNLQTLAIKGLLHKVTYRCGNACACTSKPKKRYLYKRYEDDSPTSEVEGRCCLSTCRVKVLEISGYGGSLREVKQMEHFLRKLKYLETVKIGVEEDNDSEHLRTELMTLDIASSKCNIQFI.

The F-box domain maps to 4 to 51; that stretch reads RDFISSLPDEVLGKKILSLLPTKLVVSTSVLSKRWRNLFHFVDSFDLE. LRR repeat units lie at residues 114–138, 152–176, 282–305, 308–324, and 325–348; these read DHYL…SYRT, FPAL…LISG, IRNV…CYTM, FDKL…ENGW, and QALP…LLHK.

The protein is F-box/LRR-repeat protein At5g35995 of Arabidopsis thaliana (Mouse-ear cress).